Here is a 237-residue protein sequence, read N- to C-terminus: 4'-phosphopantetheinyl transferase HetI (237 aa).

Mg(2+)-binding residues include Asp-128, Glu-130, and Glu-174.

Belongs to the P-Pant transferase superfamily. Gsp/Sfp/HetI/AcpT family. Mg(2+) is required as a cofactor.

It carries out the reaction apo-[peptidyl-carrier protein] + CoA = holo-[peptidyl-carrier protein] + adenosine 3',5'-bisphosphate + H(+). Probably activates the acyl carrier protein (ACP) domain of HetM, by transferring the 4'-phosphopantetheinyl moiety of coenzyme A (CoA) to a serine residue. May be required for maintaining vegetative growth and probably acts via HetN to inhibit differentiation. The sequence is that of 4'-phosphopantetheinyl transferase HetI (hetI) from Nostoc sp. (strain PCC 7120 / SAG 25.82 / UTEX 2576).